Reading from the N-terminus, the 32-residue chain is Ranatuerin-2Lb (32 aa).

The cysteines at positions 27 and 32 are disulfide-linked.

Expressed by the skin glands.

The protein localises to the secreted. Functionally, antibacterial activity against Gram-positive bacterium S.aureus and Gram-negative bacterium E.coli. Has activity against C.albicans. The sequence is that of Ranatuerin-2Lb from Rana luteiventris (Columbia spotted frog).